The following is a 437-amino-acid chain: Cytochrome b (437 aa).

Residues 45–65 (WIWGIVLAFTLVLQIVTGIVL) form a helical membrane-spanning segment. Positions 97 and 111 each coordinate heme b. Transmembrane regions (helical) follow at residues 100 to 120 (GASLFFLAVYIHIFRGLYYGS), 129 to 149 (WIVGMVIYLLMMGTAFMGYVL), 156 to 176 (FWGATVITGLFGAIPGIGPSI), 194 to 214 (FFSLHYLLPFVIAALVAIHIW), 248 to 268 (FVIKDLFALALVLLGFFAVVA), 298 to 318 (FLPFYAILRAFAADVWVVILV), 330 to 350 (FFGVIAMFGAIAVMALAPWLD), 365 to 385 (MWFWFLVLDFVVLTWVGAMPT), and 391 to 411 (WISLIASTYWFAYFLVILPLL). Positions 198 and 212 each coordinate heme b.

The protein belongs to the cytochrome b family. In terms of assembly, the main subunits of complex b-c1 are: cytochrome b, cytochrome c1 and the Rieske protein. Heme b is required as a cofactor.

It localises to the cell membrane. Its function is as follows. Component of the ubiquinol-cytochrome c reductase complex (complex III or cytochrome b-c1 complex), which is a respiratory chain that generates an electrochemical potential coupled to ATP synthesis. The sequence is that of Cytochrome b (petB) from Rhodobacter capsulatus (Rhodopseudomonas capsulata).